We begin with the raw amino-acid sequence, 97 residues long: Large ribosomal subunit protein eL21 (97 aa).

The protein belongs to the eukaryotic ribosomal protein eL21 family.

The chain is Large ribosomal subunit protein eL21 from Methanospirillum hungatei JF-1 (strain ATCC 27890 / DSM 864 / NBRC 100397 / JF-1).